The chain runs to 42 residues: Potassium channel gamma toxin gamma-KTx 1.9 (42 aa).

Intrachain disulfides connect cysteine 5–cysteine 23, cysteine 11–cysteine 34, cysteine 20–cysteine 39, and cysteine 24–cysteine 41.

The protein belongs to the ergtoxin family. Gamma-KTx 1 subfamily. As to expression, expressed by the venom gland.

It is found in the secreted. Functionally, blocks human voltage-gated potassium channel Kv11.1/KCNH2/ERG1 (IC(50)=16.9 nM). This Centruroides tecomanus (Scorpion) protein is Potassium channel gamma toxin gamma-KTx 1.9.